The primary structure comprises 157 residues: Frd operon probable iron-sulfur subunit A (157 aa).

4Fe-4S ferredoxin-type domains lie at lysine 24 to lysine 55, aspartate 56 to arginine 85, and phenylalanine 100 to arginine 133. 12 residues coordinate [4Fe-4S] cluster: cysteine 34, cysteine 37, cysteine 42, cysteine 46, cysteine 65, cysteine 68, cysteine 71, cysteine 75, cysteine 107, cysteine 110, cysteine 119, and cysteine 123.

This is Frd operon probable iron-sulfur subunit A from Proteus vulgaris.